We begin with the raw amino-acid sequence, 256 residues long: Tryptophan synthase alpha chain (256 aa).

Residues Glu45 and Asp56 each act as proton acceptor in the active site.

Belongs to the TrpA family. Tetramer of two alpha and two beta chains.

The catalysed reaction is (1S,2R)-1-C-(indol-3-yl)glycerol 3-phosphate + L-serine = D-glyceraldehyde 3-phosphate + L-tryptophan + H2O. It functions in the pathway amino-acid biosynthesis; L-tryptophan biosynthesis; L-tryptophan from chorismate: step 5/5. The alpha subunit is responsible for the aldol cleavage of indoleglycerol phosphate to indole and glyceraldehyde 3-phosphate. The chain is Tryptophan synthase alpha chain from Christiangramia forsetii (strain DSM 17595 / CGMCC 1.15422 / KT0803) (Gramella forsetii).